A 273-amino-acid chain; its full sequence is Formamidopyrimidine-DNA glycosylase (273 aa).

P2 serves as the catalytic Schiff-base intermediate with DNA. The Proton donor role is filled by E3. The Proton donor; for beta-elimination activity role is filled by K59. 3 residues coordinate DNA: H93, R111, and R154. The FPG-type zinc finger occupies 239–273 (KVYGRGGEPCKECGHTLVRIRLAGRSTVFCPCCQV). The active-site Proton donor; for delta-elimination activity is the R263.

The protein belongs to the FPG family. Monomer. Zn(2+) serves as cofactor.

The catalysed reaction is Hydrolysis of DNA containing ring-opened 7-methylguanine residues, releasing 2,6-diamino-4-hydroxy-5-(N-methyl)formamidopyrimidine.. The enzyme catalyses 2'-deoxyribonucleotide-(2'-deoxyribose 5'-phosphate)-2'-deoxyribonucleotide-DNA = a 3'-end 2'-deoxyribonucleotide-(2,3-dehydro-2,3-deoxyribose 5'-phosphate)-DNA + a 5'-end 5'-phospho-2'-deoxyribonucleoside-DNA + H(+). Involved in base excision repair of DNA damaged by oxidation or by mutagenic agents. Acts as a DNA glycosylase that recognizes and removes damaged bases. Has a preference for oxidized purines, such as 7,8-dihydro-8-oxoguanine (8-oxoG). Has AP (apurinic/apyrimidinic) lyase activity and introduces nicks in the DNA strand. Cleaves the DNA backbone by beta-delta elimination to generate a single-strand break at the site of the removed base with both 3'- and 5'-phosphates. This Desulfitobacterium hafniense (strain DSM 10664 / DCB-2) protein is Formamidopyrimidine-DNA glycosylase.